The chain runs to 858 residues: Leucine--tRNA ligase (858 aa).

A 'HIGH' region motif is present at residues 53–63 (PYPSGNLHMGH). A 'KMSKS' region motif is present at residues 622–626 (KMSKS). Position 625 (Lys-625) interacts with ATP.

This sequence belongs to the class-I aminoacyl-tRNA synthetase family.

Its subcellular location is the cytoplasm. The catalysed reaction is tRNA(Leu) + L-leucine + ATP = L-leucyl-tRNA(Leu) + AMP + diphosphate. This Prochlorococcus marinus subsp. pastoris (strain CCMP1986 / NIES-2087 / MED4) protein is Leucine--tRNA ligase.